We begin with the raw amino-acid sequence, 420 residues long: UDP-glucuronic acid decarboxylase 1 (420 aa).

Residue Met1 is modified to N-acetylmethionine. Residues 1 to 19 (MVSKALLRLVSAVNRRRMK) are Cytoplasmic-facing. A helical; Signal-anchor for type II membrane protein membrane pass occupies residues 20–40 (LLLGIALLAYVASVWGNFVNM). Residues 41-420 (RSIQENGELK…RIKKGRTRHS (380 aa)) are Lumenal-facing. Thr94 is modified (phosphothreonine). NAD(+)-binding residues include Gly98, Phe99, Val100, Asp119, Asn120, Phe122, Thr123, Gly124, Asp144, and Val145. UDP-alpha-D-glucuronate is bound by residues Leu149 and Tyr150. Residues Leu159 and Ser161 each contribute to the NAD(+) site. Lys177 serves as a coordination point for UDP-alpha-D-glucuronate. Thr178 provides a ligand contact to NAD(+). UDP-alpha-D-glucuronate contacts are provided by Asn185, Gly188, Lys191, and Arg192. The NAD(+) site is built by Ala200, Tyr231, and Lys235. Tyr231 functions as the Proton acceptor in the catalytic mechanism. Tyr245, Gln248, and Glu249 together coordinate UDP-alpha-D-glucuronate. NAD(+) contacts are provided by Thr261, His267, and Arg272. N-linked (GlcNAc...) asparagine glycosylation occurs at Asn316.

This sequence belongs to the NAD(P)-dependent epimerase/dehydratase family. UDP-glucuronic acid decarboxylase subfamily. As to quaternary structure, homodimer and homotetramer. Interacts with AKT1. Requires NAD(+) as cofactor.

The protein localises to the golgi apparatus. It localises to the golgi stack membrane. The catalysed reaction is UDP-alpha-D-glucuronate + H(+) = UDP-alpha-D-xylose + CO2. Its pathway is nucleotide-sugar biosynthesis; UDP-alpha-D-xylose biosynthesis; UDP-alpha-D-xylose from UDP-alpha-D-glucuronate: step 1/1. Its function is as follows. Catalyzes the NAD-dependent decarboxylation of UDP-glucuronic acid to UDP-xylose. Necessary for the biosynthesis of the core tetrasaccharide in glycosaminoglycan biosynthesis. This chain is UDP-glucuronic acid decarboxylase 1, found in Homo sapiens (Human).